Consider the following 448-residue polypeptide: Probable glycine dehydrogenase (decarboxylating) subunit 1 (448 aa).

This sequence belongs to the GcvP family. N-terminal subunit subfamily. In terms of assembly, the glycine cleavage system is composed of four proteins: P, T, L and H. In this organism, the P 'protein' is a heterodimer of two subunits.

The enzyme catalyses N(6)-[(R)-lipoyl]-L-lysyl-[glycine-cleavage complex H protein] + glycine + H(+) = N(6)-[(R)-S(8)-aminomethyldihydrolipoyl]-L-lysyl-[glycine-cleavage complex H protein] + CO2. Its function is as follows. The glycine cleavage system catalyzes the degradation of glycine. The P protein binds the alpha-amino group of glycine through its pyridoxal phosphate cofactor; CO(2) is released and the remaining methylamine moiety is then transferred to the lipoamide cofactor of the H protein. The sequence is that of Probable glycine dehydrogenase (decarboxylating) subunit 1 from Listeria monocytogenes serotype 4b (strain CLIP80459).